A 222-amino-acid polypeptide reads, in one-letter code: uncharacterized protein (222 aa).

The protein belongs to the PhoU family.

It localises to the cytoplasm. Not known; probably involved in phosphate transport and/or metabolism. This is an uncharacterized protein from Deinococcus radiodurans (strain ATCC 13939 / DSM 20539 / JCM 16871 / CCUG 27074 / LMG 4051 / NBRC 15346 / NCIMB 9279 / VKM B-1422 / R1).